The following is a 268-amino-acid chain: Undecaprenyl-diphosphatase (268 aa).

7 helical membrane-spanning segments follow: residues 47 to 67 (FAVL…FAKL), 83 to 103 (FVIG…VAGS), 109 to 129 (LFNP…LLWV), 144 to 164 (FPLP…IPGV), 184 to 204 (AAEF…VYDF), 218 to 238 (IVAI…KTFL), and 246 to 266 (FELF…ALAM).

The protein belongs to the UppP family.

It is found in the cell inner membrane. It carries out the reaction di-trans,octa-cis-undecaprenyl diphosphate + H2O = di-trans,octa-cis-undecaprenyl phosphate + phosphate + H(+). Functionally, catalyzes the dephosphorylation of undecaprenyl diphosphate (UPP). Confers resistance to bacitracin. The chain is Undecaprenyl-diphosphatase from Rhodopseudomonas palustris (strain BisB5).